A 164-amino-acid chain; its full sequence is UPF0114 protein YqhA (164 aa).

3 helical membrane passes run 15–35 (LLAP…LKFF), 53–73 (LILV…LVMV), and 136–156 (LMWY…MGYL).

This sequence belongs to the UPF0114 family.

Its subcellular location is the cell membrane. In Salmonella dublin (strain CT_02021853), this protein is UPF0114 protein YqhA.